Reading from the N-terminus, the 378-residue chain is UPF0754 membrane protein BCAH820_0954 (378 aa).

2 consecutive transmembrane segments (helical) span residues 1-21 (MNIW…GGFT) and 357-377 (YLGA…LLFL).

It belongs to the UPF0754 family.

It is found in the cell membrane. The polypeptide is UPF0754 membrane protein BCAH820_0954 (Bacillus cereus (strain AH820)).